Here is an 801-residue protein sequence, read N- to C-terminus: Conserved oligomeric Golgi complex subunit 4 (801 aa).

A disordered region spans residues 397–427; it reads IRSPSGDGDDEENEEARQERHRLRKEAKEQK.

This sequence belongs to the COG4 family. As to quaternary structure, component of the conserved oligomeric Golgi complex which is composed of eight different subunits and is required for normal Golgi morphology and localization.

Its subcellular location is the golgi apparatus membrane. In terms of biological role, required for normal Golgi function. The sequence is that of Conserved oligomeric Golgi complex subunit 4 (cogc-4) from Caenorhabditis elegans.